We begin with the raw amino-acid sequence, 309 residues long: Olfactory receptor 7A17 (309 aa).

At 1–25 (MEPENDTGISEFVLLGLSEEPELQP) the chain is on the extracellular side. N-linked (GlcNAc...) asparagine glycosylation is present at Asn5. The helical transmembrane segment at 26–46 (FLFGLFLSMYLVTVLGNLLII) threads the bilayer. The Cytoplasmic segment spans residues 47-54 (LATISDSH). Residues 55-75 (LHTPMYFFLSNLSFADICFIS) form a helical membrane-spanning segment. Topologically, residues 76–99 (TTIPKMLINIQTQSRVITYAGCIT) are extracellular. A disulfide bridge connects residues Cys97 and Cys189. A helical transmembrane segment spans residues 100 to 120 (QMCFFVLFGGLDSLLLAVMAY). Residues 121–139 (DRFVAICHPLHYTVIMNPR) are Cytoplasmic-facing. A helical transmembrane segment spans residues 140–160 (LCGLLVLASWMIAALNSLSQS). Over 161–197 (LMVLWLSFCTDLEIPHFFCELNQVIHLACSDTFLNDM) the chain is Extracellular. A helical membrane pass occupies residues 198-217 (GMYFAAGLLAGGPLVGILCS). The Cytoplasmic portion of the chain corresponds to 218 to 237 (YSKIVSSIRAISSAQGKYKA). A helical transmembrane segment spans residues 238-258 (FSTCASHLSVVSLFCCTGLGV). The Extracellular segment spans residues 259–271 (YLTSAATHNSHTS). Residues 272 to 292 (ATASVMYTVATPMLNPFIYSL) traverse the membrane as a helical segment. Residues 293 to 309 (RNKDIKRALKMSFRGKQ) are Cytoplasmic-facing.

It belongs to the G-protein coupled receptor 1 family.

It localises to the cell membrane. Its function is as follows. Odorant receptor. This Homo sapiens (Human) protein is Olfactory receptor 7A17 (OR7A17).